Here is a 539-residue protein sequence, read N- to C-terminus: Glutamate/serine transporter AimA (539 aa).

The next 13 membrane-spanning stretches (helical) occupy residues Phe11 to Trp31, Ile36 to Ala56, Ser82 to Val102, Ala137 to Phe157, Ile164 to Phe184, Gly199 to Phe219, Ile238 to Phe258, Leu283 to Ser303, Leu350 to Ile370, Leu401 to Trp421, Trp424 to Tyr444, Phe457 to Gly477, and Val486 to Trp506.

The protein belongs to the amino acid-polyamine-organocation (APC) superfamily. AGT (TC 2.A.3.11) family.

Its subcellular location is the cell membrane. Functionally, major glutamate and serine transporter. Cannot transport threonine. AimA is the major glutamate transporter under standard growth conditions when glutamate is not limiting in the medium. This is Glutamate/serine transporter AimA from Bacillus subtilis (strain 168).